The chain runs to 275 residues: Notch homolog 2 N-terminal-like protein B (275 aa).

The first 25 residues, 1 to 25 (MPALRPALLWALLALWLCCATPAHA), serve as a signal peptide directing secretion. EGF-like domains follow at residues 26–63 (LQCR…EYCQ), 64–102 (HRDP…EDCQ), 105–143 (TSHP…KECQ), and 144–180 (WTDA…QKCE). 17 cysteine pairs are disulfide-bonded: Cys28-Cys41, Cys35-Cys51, Cys53-Cys62, Cys68-Cys79, Cys73-Cys90, Cys92-Cys101, Cys109-Cys121, Cys115-Cys131, Cys133-Cys142, Cys148-Cys159, Cys153-Cys168, Cys170-Cys179, Cys186-Cys198, Cys192-Cys207, Cys209-Cys218, Cys225-Cys236, and Cys230-Cys246. Asn46 carries N-linked (GlcNAc...) asparagine glycosylation. N-linked (GlcNAc...) asparagine glycosylation is present at Asn155. Residues 182–219 (DVNECDIPGHCQHGGICLNLPGSYQCQCLQGFTGQYCD) form the EGF-like 5; calcium-binding domain. One can recognise an EGF-like 6 domain in the interval 221 to 258 (LYVPCAPSPCVNGGTCRQTGDFTFECNCLPETVRRGTE).

This sequence belongs to the NOTCH family. In terms of assembly, interacts with NOTCH2. Interacts with DLL1; the interaction is direct. Expressed in radial glia neural stem cells during cortical development.

It is found in the secreted. Its function is as follows. Human-specific protein that promotes neural progenitor proliferation and evolutionary expansion of the brain neocortex by regulating the Notch signaling pathway. Able to promote neural progenitor self-renewal, possibly by down-regulating neuronal differentiation genes, thereby delaying the differentiation of neuronal progenitors and leading to an overall final increase in neuronal production. Acts by enhancing the Notch signaling pathway via two different mechanisms that probably work in parallel to reach the same effect. Enhances Notch signaling pathway in a non-cell-autonomous manner via direct interaction with NOTCH2. Also promotes Notch signaling pathway in a cell-autonomous manner through inhibition of cis DLL1-NOTCH2 interactions, which promotes neuronal differentiation. The sequence is that of Notch homolog 2 N-terminal-like protein B from Homo sapiens (Human).